The following is a 369-amino-acid chain: DNA replication and repair protein RecF (369 aa).

30–37 (GENAQGKT) contacts ATP.

It belongs to the RecF family.

It is found in the cytoplasm. Functionally, the RecF protein is involved in DNA metabolism; it is required for DNA replication and normal SOS inducibility. RecF binds preferentially to single-stranded, linear DNA. It also seems to bind ATP. In Oceanobacillus iheyensis (strain DSM 14371 / CIP 107618 / JCM 11309 / KCTC 3954 / HTE831), this protein is DNA replication and repair protein RecF.